The primary structure comprises 311 residues: Homoserine kinase (311 aa).

Residue 88 to 98 participates in ATP binding; sequence PEGLGLGSSGA.

This sequence belongs to the GHMP kinase family. Homoserine kinase subfamily.

The protein resides in the cytoplasm. The catalysed reaction is L-homoserine + ATP = O-phospho-L-homoserine + ADP + H(+). Its pathway is amino-acid biosynthesis; L-threonine biosynthesis; L-threonine from L-aspartate: step 4/5. In terms of biological role, catalyzes the ATP-dependent phosphorylation of L-homoserine to L-homoserine phosphate. The chain is Homoserine kinase from Saccharolobus islandicus (strain L.S.2.15 / Lassen #1) (Sulfolobus islandicus).